The chain runs to 108 residues: Resistin (108 aa).

An N-terminal signal peptide occupies residues 1–18 (MKALCLLLLPVLGLLVSS). Disulfide bonds link Cys51-Cys104, Cys63-Cys103, Cys72-Cys89, Cys74-Cys91, and Cys78-Cys93.

The protein belongs to the resistin/FIZZ family. As to quaternary structure, homodimer; disulfide-linked. Interacts with DEFA1. In terms of tissue distribution, expressed in white adipose tissue (at protein level). Widely expressed, with particularly strong expression in lung, bone marrow, breast and peripheral blood. Expressed strongly in bone marrow and at lower levels in lung, but not detected in other tissues. Isoform 2 is detected in adipose tissue, bone marrow, brain, lung, peripheral blood, placenta and thymus.

It localises to the secreted. In terms of biological role, hormone that seems to suppress insulin ability to stimulate glucose uptake into adipose cells. Potentially links obesity to diabetes. Promotes chemotaxis in myeloid cells. This chain is Resistin (RETN), found in Homo sapiens (Human).